Consider the following 108-residue polypeptide: Thiosulfate sulfurtransferase GlpE (108 aa).

The region spanning 17 to 105 (QEKEAVLVDI…WQRQFPAEVA (89 aa)) is the Rhodanese domain. C65 acts as the Cysteine persulfide intermediate in catalysis.

The protein belongs to the GlpE family.

The protein resides in the cytoplasm. It catalyses the reaction thiosulfate + hydrogen cyanide = thiocyanate + sulfite + 2 H(+). It carries out the reaction thiosulfate + [thioredoxin]-dithiol = [thioredoxin]-disulfide + hydrogen sulfide + sulfite + 2 H(+). In terms of biological role, transferase that catalyzes the transfer of sulfur from thiosulfate to thiophilic acceptors such as cyanide or dithiols. May function in a CysM-independent thiosulfate assimilation pathway by catalyzing the conversion of thiosulfate to sulfite, which can then be used for L-cysteine biosynthesis. This chain is Thiosulfate sulfurtransferase GlpE, found in Shigella dysenteriae serotype 1 (strain Sd197).